Consider the following 267-residue polypeptide: MKGTYYINHGDPLMYLKKHIKLRQFLEGWQENVVIEKPKSILIISAHWDTNVPTVNFVEHCDTIHDFDDYPDPLYQIQYRAPGAPNLAKKVEELLKESGMECEIDTKRGLDHAAWFPLMFMYPEANIPICELSVQPSKDGIHHYNVGKALSPLLQQGVLIIGSGGTVHPSDDTPHCPNGVAPWAIEFDNWLEDALLSGRYEDVNNFKKLAPNWEISHPGQEHLYPLHVALGAAGKNPKTQLIHRSWAANGVFGYSTYNFTPTTQKTD.

Zn(2+)-binding residues include H9, H47, H168, and H222.

It belongs to the DODA-type extradiol aromatic ring-opening dioxygenase family. The cofactor is Zn(2+). Requires Fe(2+) as cofactor. Expressed in petals. Not detected in leaves, stems and roots.

The protein resides in the cytoplasm. It catalyses the reaction L-dopa + O2 = 4-(L-alanin-3-yl)-2-hydroxy-cis,cis-muconate 6-semialdehyde + H(+). It participates in pigment biosynthesis; betalain biosynthesis. Opens the cyclic ring of dihydroxy-phenylalanine (DOPA) between carbons 4 and 5, thus producing an unstable seco-DOPA that rearranges nonenzymatically to betalamic acid. Produces mainly (S)-betalamic acid. Required for the coloration of flowers. This Mirabilis jalapa (Garden four-o'clock) protein is 4,5-DOPA dioxygenase extradiol (DOD).